The following is a 555-amino-acid chain: Gamma-aminobutyric acid receptor subunit alpha-4 (555 aa).

Residues 1–35 (MVSAKKVPAIAMSFGVSFALLHFLCLAACLNESPG) form the signal peptide. Over 36–259 (QNQKEEKLCP…FHLRRKMGYF (224 aa)) the chain is Extracellular. Residue Asn47 is glycosylated (N-linked (GlcNAc...) asparagine). 4-aminobutanoate is bound at residue Arg100. N-linked (GlcNAc...) asparagine glycans are attached at residues Asn144 and Asn157. Thr163 contacts 4-aminobutanoate. Cys172 and Cys186 are oxidised to a cystine. A helical membrane pass occupies residues 260–280 (MIQTYIPCIMTVILSQVSFWI). At 281–284 (NKES) the chain is on the cytoplasmic side. Residues 285 to 305 (VPARTVFGITTVLTMTTLSIS) traverse the membrane as a helical segment. At 306-318 (ARHSLPKVSYATA) the chain is on the extracellular side. A helical transmembrane segment spans residues 319-341 (MDWFIAVCFAFVFSALIEFAAVN). At 342 to 518 (YFTNVQMEKA…PPPSGSGTSK (177 aa)) the chain is on the cytoplasmic side. Disordered regions lie at residues 354 to 435 (KTSK…SPNP) and 495 to 516 (GTSGKLSATTTPSAPPPSGSGT). The segment covering 410–421 (SSKSSTVVQGSS) has biased composition (low complexity). Residues 422 to 435 (EATPQSYLASSPNP) show a composition bias toward polar residues. Residues 519-545 (IDKYARILFPVTFGAFNMVYWVVYLSK) form a helical membrane-spanning segment. Topologically, residues 546-555 (DTMEKSESLM) are extracellular.

The protein belongs to the ligand-gated ion channel (TC 1.A.9) family. Gamma-aminobutyric acid receptor (TC 1.A.9.5) subfamily. GABRA4 sub-subfamily. In terms of assembly, heteropentamer, formed by a combination of alpha (GABRA1-6), beta (GABRB1-3), gamma (GABRG1-3), delta (GABRD), epsilon (GABRE), rho (GABRR1-3), pi (GABRP) and theta (GABRQ) chains, each subunit exhibiting distinct physiological and pharmacological properties. Expressed in the brain.

Its subcellular location is the cell membrane. The protein resides in the postsynaptic cell membrane. The catalysed reaction is chloride(in) = chloride(out). With respect to regulation, potentiated by histamine. Its function is as follows. Alpha subunit of the heteropentameric ligand-gated chloride channel gated by gamma-aminobutyric acid (GABA), a major inhibitory neurotransmitter in the brain. GABA-gated chloride channels, also named GABA(A) receptors (GABAAR), consist of five subunits arranged around a central pore and contain GABA active binding site(s) located at the alpha and beta subunit interface(s). When activated by GABA, GABAARs selectively allow the flow of chloride anions across the cell membrane down their electrochemical gradient. GABAARs containing alpha-4 are predominantly extrasynaptic, contributing to tonic inhibition in dentate granule cells and thalamic relay neurons. Extrasynaptic alpha-4-containing GABAARs control levels of excitability and network activity. GABAARs containing alpha-4 are often found with the delta or gamma-2 subunits, in combination with beta subunits. GABAAR containing alpha-4-beta-3-delta subunits can simultaneously bind GABA and histamine where histamine binds at the interface of two neighboring beta subunits, which may be involved in the regulation of sleep and wakefulness. The protein is Gamma-aminobutyric acid receptor subunit alpha-4 (GABRA4) of Bos taurus (Bovine).